The primary structure comprises 146 residues: Large ribosomal subunit protein uL15 (146 aa).

Residues 1–58 (MNLSNLRAPKKANRNRKRVGRGMGSGHGKTSTRGHKGQRSRSGSRSMRGFEGGQMPLH) form a disordered region. 2 stretches are compositionally biased toward basic residues: residues 8–20 (APKK…KRVG) and 30–39 (TSTRGHKGQR). A compositionally biased stretch (low complexity) spans 40–49 (SRSGSRSMRG).

The protein belongs to the universal ribosomal protein uL15 family. Part of the 50S ribosomal subunit.

Its function is as follows. Binds to the 23S rRNA. This Acidobacterium capsulatum (strain ATCC 51196 / DSM 11244 / BCRC 80197 / JCM 7670 / NBRC 15755 / NCIMB 13165 / 161) protein is Large ribosomal subunit protein uL15.